Reading from the N-terminus, the 274-residue chain is Thiazole synthase (274 aa).

The Schiff-base intermediate with DXP role is filled by lysine 115. 1-deoxy-D-xylulose 5-phosphate-binding positions include glycine 176, 202 to 203 (AG), and 224 to 225 (NS).

The protein belongs to the ThiG family. In terms of assembly, homotetramer. Forms heterodimers with either ThiH or ThiS.

The protein resides in the cytoplasm. It catalyses the reaction [ThiS sulfur-carrier protein]-C-terminal-Gly-aminoethanethioate + 2-iminoacetate + 1-deoxy-D-xylulose 5-phosphate = [ThiS sulfur-carrier protein]-C-terminal Gly-Gly + 2-[(2R,5Z)-2-carboxy-4-methylthiazol-5(2H)-ylidene]ethyl phosphate + 2 H2O + H(+). It participates in cofactor biosynthesis; thiamine diphosphate biosynthesis. In terms of biological role, catalyzes the rearrangement of 1-deoxy-D-xylulose 5-phosphate (DXP) to produce the thiazole phosphate moiety of thiamine. Sulfur is provided by the thiocarboxylate moiety of the carrier protein ThiS. In vitro, sulfur can be provided by H(2)S. The sequence is that of Thiazole synthase from Parasynechococcus marenigrum (strain WH8102).